The following is a 616-amino-acid chain: Chaperone protein HscA (616 aa).

Belongs to the heat shock protein 70 family.

Functionally, chaperone involved in the maturation of iron-sulfur cluster-containing proteins. Has a low intrinsic ATPase activity which is markedly stimulated by HscB. Involved in the maturation of IscU. The protein is Chaperone protein HscA of Shigella boydii serotype 18 (strain CDC 3083-94 / BS512).